A 262-amino-acid chain; its full sequence is MEVREKKDEKMEMTRRKSSALDHHRLPPYTYSQTANKEKPTTKRNGSDPDPDPDLDTNPISISHAPRSYARPQTTSPGKARYRECQKNHAASSGGHVVDGCGEFMSSGEEGTVESLLCAACDCHRSFHRKEIDGLFVVNFNSFGHSQRPLGSRHVSPIMMSFGGGGGCAAESSTEDLNKFHQSFSGYGVDQFHHYQPKKRFRTKFNEEQKEKMMEFAEKIGWRMTKLEDDEVNRFCREIKVKRQVFKVWMHNNKQAAKKKDL.

Composition is skewed to basic and acidic residues over residues 1-25 and 36-47; these read MEVR…DHHR and NKEKPTTKRNGS. The segment at 1–93 is disordered; it reads MEVREKKDEK…ECQKNHAASS (93 aa). The ZF-HD dimerization-type; degenerate zinc-finger motif lies at 82-131; the sequence is YRECQKNHAASSGGHVVDGCGEFMSSGEEGTVESLLCAACDCHRSFHRKE. The segment at residues 198 to 261 is a DNA-binding region (homeobox); sequence KKRFRTKFNE…NNKQAAKKKD (64 aa).

As to quaternary structure, homo- and heterodimer with other ZFHD proteins. Interacts with MIF1 and MIF3; these interactions prevent nuclear localization and DNA-binding to inhibit transcription regulation activity. Binds to ZHD1, ZHD2, ZHD10 and ZHD11. In terms of tissue distribution, expressed in seedlings, roots, leaves, stems, flowers and inflorescence.

It is found in the nucleus. Functionally, putative transcription factor. The chain is Zinc-finger homeodomain protein 6 (ZHD6) from Arabidopsis thaliana (Mouse-ear cress).